We begin with the raw amino-acid sequence, 221 residues long: MHLVGVLDIAKDILKANKRLADKNRKLLNKHGVVAFDFMGAIGSGKTLLIEKLIDNLKDKYKIACIAGDVIAKFDAERMEKHGAKVVPLNTGKECHLDAHLVGHALEDLNLDEIDLLFIENVGNLICPADFDLGTHKRIVVISTTEGDDTIEKHPGIMKTADLIVINKIDLADAVGADIKKMENDAKRINPDAEVVLLSLKTMEGFDKVLEFIEKSVKEVK.

Positions 35–196 (AFDFMGAIGS…KRINPDAEVV (162 aa)) are G-domain. Ni(2+)-binding residues include Cys-95 and His-96. Positions 95, 96, 100, 104, and 127 each coordinate Zn(2+). Ni(2+) is bound at residue Cys-127.

Belongs to the SIMIBI class G3E GTPase family. HypB/HupM subfamily. In terms of assembly, homodimer.

Involved in the maturation of [NiFe] hydrogenases. Required for nickel insertion into the metal center of the hydrogenase. Exhibits a low intrinsic GTPase activity, which is essential for nickel insertion. The sequence is that of Probable hydrogenase maturation factor HypB from Methanocaldococcus jannaschii (strain ATCC 43067 / DSM 2661 / JAL-1 / JCM 10045 / NBRC 100440) (Methanococcus jannaschii).